The sequence spans 319 residues: tRNA pseudouridine synthase B (319 aa).

Catalysis depends on Asp49, which acts as the Nucleophile.

The protein belongs to the pseudouridine synthase TruB family. Type 1 subfamily.

It carries out the reaction uridine(55) in tRNA = pseudouridine(55) in tRNA. In terms of biological role, responsible for synthesis of pseudouridine from uracil-55 in the psi GC loop of transfer RNAs. This Aeromonas salmonicida (strain A449) protein is tRNA pseudouridine synthase B.